The sequence spans 222 residues: Cytidylate kinase (222 aa).

12–20 contacts ATP; it reads GPSGAGKGT.

Belongs to the cytidylate kinase family. Type 1 subfamily.

The protein localises to the cytoplasm. The catalysed reaction is CMP + ATP = CDP + ADP. The enzyme catalyses dCMP + ATP = dCDP + ADP. In Methylococcus capsulatus (strain ATCC 33009 / NCIMB 11132 / Bath), this protein is Cytidylate kinase.